A 100-amino-acid chain; its full sequence is Small ribosomal subunit protein uS14c (100 aa).

This sequence belongs to the universal ribosomal protein uS14 family. In terms of assembly, part of the 30S ribosomal subunit.

It is found in the plastid. It localises to the chloroplast. Its function is as follows. Binds 16S rRNA, required for the assembly of 30S particles. The polypeptide is Small ribosomal subunit protein uS14c (Aethionema cordifolium (Lebanon stonecress)).